Consider the following 89-residue polypeptide: Small ribosomal subunit protein uS15 (89 aa).

The protein belongs to the universal ribosomal protein uS15 family. In terms of assembly, part of the 30S ribosomal subunit. Forms a bridge to the 50S subunit in the 70S ribosome, contacting the 23S rRNA.

Functionally, one of the primary rRNA binding proteins, it binds directly to 16S rRNA where it helps nucleate assembly of the platform of the 30S subunit by binding and bridging several RNA helices of the 16S rRNA. In terms of biological role, forms an intersubunit bridge (bridge B4) with the 23S rRNA of the 50S subunit in the ribosome. The sequence is that of Small ribosomal subunit protein uS15 from Bradyrhizobium sp. (strain ORS 278).